Reading from the N-terminus, the 494-residue chain is GPI alpha-1,6-mannosyltransferase 2 (494 aa).

Over 1–13 (MWSLDPSQKEVLR) the chain is Cytoplasmic. A helical transmembrane segment spans residues 14–34 (FAVSCRILTLMLQALFNIIIP). At 35–77 (DHHADAFSPPRLASSCSVDQLVEGLLGGLSRWDAEHFLFIAEH) the chain is on the lumenal side. The helical transmembrane segment at 78–98 (GYLYEHNFAFFPGFPLALLMG) threads the bilayer. Topologically, residues 99 to 113 (TELLRPLQGLLSQRS) are cytoplasmic. The chain crosses the membrane as a helical span at residues 114 to 134 (CLLVSVALLNFLFSVLAAVTL). The Lumenal portion of the chain corresponds to 135 to 136 (HD). The chain crosses the membrane as a helical span at residues 137–157 (LGCLVLGCPRQAFYAAMLFCL). Residues 158-161 (SPAN) are Cytoplasmic-facing. The helical transmembrane segment at 162 to 182 (VFLAAGYSEALFAFLTFSAMG) threads the bilayer. Residues 183-192 (QLERGRSWAS) lie on the Lumenal side of the membrane. A helical transmembrane segment spans residues 193–213 (GLLFALATGVRSNGLVSVGFL). Over 214–234 (LHAQCRGFFSSLVVLNPLKPL) the chain is Cytoplasmic. The helical transmembrane segment at 235–255 (FKLMASLCLSVLTVSLPFALF) threads the bilayer. The Lumenal portion of the chain corresponds to 256-327 (QYYAYTQFCL…RYYELRQVPN (72 aa)). The chain crosses the membrane as a helical span at residues 328 to 348 (FLLATPVAVLVVWAAWTYVTT). Topologically, residues 349-379 (HPWLCLTLGLRRSKDSKKTLEKPHPGFLSPK) are cytoplasmic. A helical transmembrane segment spans residues 380 to 400 (VFVYLVHAAGLLLFGSLCMHV). Topologically, residues 401–470 (QVLTRLLCSS…NWRACSPVTR (70 aa)) are lumenal. Residues 471 to 491 (CILGYFLTYWLLGLLLHCNFL) form a helical membrane-spanning segment. Residues 492-494 (PWT) are Cytoplasmic-facing.

This sequence belongs to the PIGV family. Not N-glycosylated.

The protein resides in the endoplasmic reticulum membrane. It functions in the pathway glycolipid biosynthesis; glycosylphosphatidylinositol-anchor biosynthesis. Its function is as follows. Alpha-1,6-mannosyltransferase that catalyzes the transfer of the second mannose, via an alpha-1,6 bond, from a dolichol-phosphate-mannose (Dol-P-Man) to the alpha-D-Man-(1-&gt;4)-alpha-D-GlcN-(1-&gt;6)-(1-radyl,2-acyl-sn-glycero-3-phospho)-2-acyl-inositol intermediate to generate an alpha-D-Man-(1-&gt;6)-alpha-D-Man-(1-&gt;4)-alpha-D-GlcN-(1-&gt;6)-(1-radyl,2-acyl-sn-glycero-3-phospho)-2-acyl-inositol and participates in the seventh step of the glycosylphosphatidylinositol-anchor biosynthesis. Also transfers the second mannose on a 2-PEtn-alpha-D-Man-(1-&gt;4)-alpha-D-GlcN-(1-&gt;6)-(1-radyl,2-acyl-sn-glycero-3-phospho)-2-acyl-inositol. The polypeptide is GPI alpha-1,6-mannosyltransferase 2 (Cricetulus griseus (Chinese hamster)).